Consider the following 310-residue polypeptide: p-hydroxybenzoic acid efflux pump subunit AaeA (310 aa).

A helical transmembrane segment spans residues 12-32 (AITVILVILAFVAIFRAWVYY).

This sequence belongs to the membrane fusion protein (MFP) (TC 8.A.1) family.

It localises to the cell inner membrane. In terms of biological role, forms an efflux pump with AaeB. This chain is p-hydroxybenzoic acid efflux pump subunit AaeA, found in Klebsiella pneumoniae (strain 342).